The sequence spans 137 residues: Nucleoside diphosphate kinase (137 aa).

ATP contacts are provided by K9, F57, R85, T91, R102, and N112. H115 (pros-phosphohistidine intermediate) is an active-site residue.

Belongs to the NDK family. Homotetramer. Requires Mg(2+) as cofactor.

The protein localises to the cytoplasm. It catalyses the reaction a 2'-deoxyribonucleoside 5'-diphosphate + ATP = a 2'-deoxyribonucleoside 5'-triphosphate + ADP. The enzyme catalyses a ribonucleoside 5'-diphosphate + ATP = a ribonucleoside 5'-triphosphate + ADP. In terms of biological role, major role in the synthesis of nucleoside triphosphates other than ATP. The ATP gamma phosphate is transferred to the NDP beta phosphate via a ping-pong mechanism, using a phosphorylated active-site intermediate. The protein is Nucleoside diphosphate kinase of Geobacter sulfurreducens (strain ATCC 51573 / DSM 12127 / PCA).